The primary structure comprises 1183 residues: Spermatogenesis-associated protein 31G1 (1183 aa).

Disordered stretches follow at residues 109–153 (TPIG…FPTF), 469–555 (LMPA…SPWA), 661–686 (TVDDVPRSEATGKNTDNTKKCSSSEP), 843–884 (ASQG…VSEV), 973–1032 (CLHS…TGLL), and 1048–1087 (QKRGSSRKSKAEKCGRTARLGSPTNTRENNPAQACRPAEA). Residues 124–134 (CRSEGRPRATE) show a composition bias toward basic and acidic residues. Polar residues predominate over residues 135-153 (TQEQVLIQSPSPSRSFPTF). Residues 487–509 (NPKERLSAPKDVRENLGYREHPH) are compositionally biased toward basic and acidic residues. A compositionally biased stretch (polar residues) spans 671–685 (TGKNTDNTKKCSSSE). A compositionally biased stretch (pro residues) spans 847-858 (PNPPAVNPPQPT). The segment covering 975-984 (HSSSQPQAQA) has biased composition (polar residues). Positions 993–1002 (QKSKRLKRKA) are enriched in basic residues. The span at 1069–1079 (SPTNTRENNPA) shows a compositional bias: polar residues.

In terms of tissue distribution, expressed in kidney and testis. Expressed at lower levels in stomach, intestine, epididymis and ovary. Expressed at very low levels in heart and spleen.

Functionally, dispensable for normal development and fertility. In Mus musculus (Mouse), this protein is Spermatogenesis-associated protein 31G1 (Spata31g1).